The primary structure comprises 137 residues: Small ribosomal subunit protein uS9c (137 aa).

This sequence belongs to the universal ribosomal protein uS9 family.

It localises to the plastid. Its subcellular location is the chloroplast. The chain is Small ribosomal subunit protein uS9c (rps9) from Mesostigma viride (Green alga).